Here is a 177-residue protein sequence, read N- to C-terminus: Large ribosomal subunit protein uL6 (177 aa).

It belongs to the universal ribosomal protein uL6 family. As to quaternary structure, part of the 50S ribosomal subunit.

This protein binds to the 23S rRNA, and is important in its secondary structure. It is located near the subunit interface in the base of the L7/L12 stalk, and near the tRNA binding site of the peptidyltransferase center. The polypeptide is Large ribosomal subunit protein uL6 (Acidovorax ebreus (strain TPSY) (Diaphorobacter sp. (strain TPSY))).